The chain runs to 388 residues: Processive diacylglycerol beta-glucosyltransferase (388 aa).

Belongs to the glycosyltransferase 28 family. UgtP subfamily.

The protein resides in the cell membrane. The catalysed reaction is a 1,2-diacyl-3-O-(beta-D-glucopyranosyl)-sn-glycerol + UDP-alpha-D-glucose = a 1,2-diacyl-3-O-(beta-D-Glc-(1-&gt;6)-beta-D-Glc)-sn-glycerol + UDP + H(+). It carries out the reaction a 1,2-diacyl-3-O-(beta-D-Glc-(1-&gt;6)-beta-D-Glc)-sn-glycerol + UDP-alpha-D-glucose = a 1,2-diacyl-3-O-(beta-D-Glc-(1-&gt;6)-beta-D-Glc-(1-&gt;6)-beta-D-Glc)-sn-glycerol + UDP + H(+). The enzyme catalyses a 1,2-diacyl-sn-glycerol + UDP-alpha-D-glucose = a 1,2-diacyl-3-O-(beta-D-glucopyranosyl)-sn-glycerol + UDP + H(+). It functions in the pathway glycolipid metabolism; diglucosyl-diacylglycerol biosynthesis. Its function is as follows. Processive glucosyltransferase involved in the biosynthesis of both the bilayer- and non-bilayer-forming membrane glucolipids. Is able to successively transfer up to three glucosyl residues to diacylglycerol (DAG), thereby catalyzing the formation of beta-monoglucosyl-DAG (3-O-(beta-D-glucopyranosyl)-1,2-diacyl-sn-glycerol), beta-diglucosyl-DAG (3-O-(beta-D-glucopyranosyl-beta-(1-&gt;6)-D-glucopyranosyl)-1,2-diacyl-sn-glycerol) and beta-triglucosyl-DAG (3-O-(beta-D-glucopyranosyl-beta-(1-&gt;6)-D-glucopyranosyl-beta-(1-&gt;6)-D-glucopyranosyl)-1,2-diacyl-sn-glycerol). Beta-diglucosyl-DAG is the predominant glycolipid found in Bacillales and is also used as a membrane anchor for lipoteichoic acid (LTA). The polypeptide is Processive diacylglycerol beta-glucosyltransferase (Bacillus cereus (strain 03BB102)).